Reading from the N-terminus, the 626-residue chain is Ankyrin repeat domain-containing protein 55 (626 aa).

ANK repeat units follow at residues 25–54 (VDLA…SILE), 59–88 (EGCT…NINT), 92–124 (YGRT…IPDK), 125–156 (NGRL…EINH), 160–189 (EGMT…DPTL), 193–222 (DFKT…GPSI), 229–259 (SGKT…NLQA), 263–292 (DDRT…DSNL), and 296–325 (NEST…AEPA). The segment covering 354-372 (KEEQKAHQKDQSRARPKEE) has biased composition (basic and acidic residues). Disordered stretches follow at residues 354–377 (KEEQ…TSEV), 455–491 (HAGL…SLEN), and 522–626 (QPGH…HDEN). The residue at position 474 (Ser-474) is a Phosphoserine. Over residues 604 to 614 (QRGHDPPRAEE) the composition is skewed to basic and acidic residues. Residues 616–626 (GGSSSPTHDEN) show a composition bias toward polar residues.

The protein is Ankyrin repeat domain-containing protein 55 (Ankrd55) of Mus musculus (Mouse).